Here is a 142-residue protein sequence, read N- to C-terminus: Large ribosomal subunit protein mL42 (142 aa).

The transit peptide at 1–31 directs the protein to the mitochondrion; sequence MAAAVKWAISNRTIWKHLLPIQNGALSSACH.

This sequence belongs to the mitochondrion-specific ribosomal protein mL42 family. As to quaternary structure, component of the mitochondrial ribosome large subunit (39S) which comprises a 16S rRNA and about 50 distinct proteins. Component of the mitochondrial ribosome small subunit (28S) which comprises a 12S rRNA and about 30 distinct proteins.

The protein resides in the mitochondrion. The protein is Large ribosomal subunit protein mL42 (Mrpl42) of Mus musculus (Mouse).